A 298-amino-acid polypeptide reads, in one-letter code: Glutamyl-Q tRNA(Asp) synthetase (298 aa).

L-glutamate is bound by residues 8–12 (RFAPS) and E44. The 'HIGH' region signature appears at 11 to 21 (PSPTGPLHFGS). Zn(2+) contacts are provided by C100, C102, Y123, and C127. L-glutamate-binding residues include Y183 and R201. The 'KMSKS' region signature appears at 239 to 243 (KLSKQ). K242 lines the ATP pocket.

Belongs to the class-I aminoacyl-tRNA synthetase family. GluQ subfamily. Zn(2+) is required as a cofactor.

In terms of biological role, catalyzes the tRNA-independent activation of glutamate in presence of ATP and the subsequent transfer of glutamate onto a tRNA(Asp). Glutamate is transferred on the 2-amino-5-(4,5-dihydroxy-2-cyclopenten-1-yl) moiety of the queuosine in the wobble position of the QUC anticodon. This chain is Glutamyl-Q tRNA(Asp) synthetase, found in Burkholderia orbicola (strain AU 1054).